The following is a 227-amino-acid chain: MTARALSELVDQGWAQALEPVREQVAQMGEFLRAELAAGHRYLPAGANVLRAFSFPFDQVRVLIVGQDPYPTPGHAVGLSFSVDPEVRPLPRSLANIFTEYTADLGYPQPSNGDLSPWAQRGVLLLNRVLTVRPGTPASHRGKGWEAVTECAIRALVARDTPMVAVLWGRDAATLKPMLTGSACVAIESPHPSPLSASRGFFGSRPFSRANELLTQMGAEPIDWRLP.

Catalysis depends on aspartate 68, which acts as the Proton acceptor.

It belongs to the uracil-DNA glycosylase (UDG) superfamily. UNG family.

It localises to the cytoplasm. The catalysed reaction is Hydrolyzes single-stranded DNA or mismatched double-stranded DNA and polynucleotides, releasing free uracil.. Its function is as follows. Excises uracil residues from the DNA which can arise as a result of misincorporation of dUMP residues by DNA polymerase or due to deamination of cytosine. The polypeptide is Uracil-DNA glycosylase (Mycobacterium sp. (strain JLS)).